The primary structure comprises 309 residues: Cytochrome c biogenesis protein CcsA (309 aa).

The next 8 helical transmembrane spans lie at 18 to 38 (LGIL…GAVF), 43 to 63 (FFIV…QLLF), 67 to 87 (ISGH…AWGI), 102 to 122 (IIPS…CFVL), 148 to 168 (VMLS…VLFI), 216 to 236 (SILI…VWAN), 250 to 267 (TWAF…HMRI), and 279 to 299 (LATS…FLGI).

This sequence belongs to the CcmF/CycK/Ccl1/NrfE/CcsA family. May interact with ccs1.

It is found in the cellular thylakoid membrane. Functionally, required during biogenesis of c-type cytochromes (cytochrome c6 and cytochrome f) at the step of heme attachment. The sequence is that of Cytochrome c biogenesis protein CcsA from Prochlorococcus marinus (strain MIT 9312).